The primary structure comprises 492 residues: N-succinylglutamate 5-semialdehyde dehydrogenase (492 aa).

220–225 (GSANTG) provides a ligand contact to NAD(+). Active-site residues include glutamate 243 and cysteine 277.

The protein belongs to the aldehyde dehydrogenase family. AstD subfamily.

The enzyme catalyses N-succinyl-L-glutamate 5-semialdehyde + NAD(+) + H2O = N-succinyl-L-glutamate + NADH + 2 H(+). The protein operates within amino-acid degradation; L-arginine degradation via AST pathway; L-glutamate and succinate from L-arginine: step 4/5. Its function is as follows. Catalyzes the NAD-dependent reduction of succinylglutamate semialdehyde into succinylglutamate. This Escherichia fergusonii (strain ATCC 35469 / DSM 13698 / CCUG 18766 / IAM 14443 / JCM 21226 / LMG 7866 / NBRC 102419 / NCTC 12128 / CDC 0568-73) protein is N-succinylglutamate 5-semialdehyde dehydrogenase.